Consider the following 1749-residue polypeptide: Intraflagellar transport protein 172 homolog (1749 aa).

Met-1 carries the post-translational modification N-acetylmethionine. A Glycyl lysine isopeptide (Lys-Gly) (interchain with G-Cter in SUMO1) cross-link involves residue Lys-4. 9 WD repeats span residues 14-53 (DGAAKVTCMAWSQNNAKFAVCTVDRVVLLYDEHGERRDKF), 64-103 (RKSYMVKGMAFSPDSTKIAIGQTDNIIYVYKIGEDWGDKK), 110-148 (IQTSAVTCLQWPAEYIIVFGLAEGKVRLANTKTNKSSTI), 150-191 (GTES…ESQG), 195-233 (NHPCPPYALAWATNSIVAAGCDRKIVAYGKEGHMLQTFD), 238-278 (PQER…WEEA), 284-323 (TNLYTITALAWKRDGSRLCVGTLCGGVEQFDCCLRRSIYK), 483-520 (SHESRVDWLELNETGHKLLFRDRKLRLHLYDIESCSKT), and 521-559 (MILNFCSYMQWVPGSDVLVAQNRNSLCVWYNIEAPERVT). The TPR 1 repeat unit spans residues 593–624 (DEGLIEFGTAIDDGNYIRATAFLETLEMTPET). Position 672 is an omega-N-methylarginine (Arg-672). TPR repeat units lie at residues 692–725 (EKNYKLAEMIFLEQNAVEEAMGMYQELHRWDECI), 809–842 (GELYERAGDLFEKIHNPQKALECYRKGNAFMKAV), 854–887 (VKLEEAWGDHLVQQKQLDAAINHYIEARCSIKAI), 912–945 (SKYYPLVAQHYASLQEYEIAEELYTKGDRTKDAI), 947–970 (MYTQAGRWEQAHKLAMKCMRPEDV), 971–1004 (SVLYITQAQEMEKQGKYREAERLYVTVQEPDLAI), 1042–1075 (EGRLQEAEYHYLEAQEWKATVNMYRASGLWEEAY), 1142–1175 (PEVHLKYAMFLEDEGKFEEAEAEFIRAGKPKEAV), 1276–1309 (VEGFVEQARHWEQAGEYSRAVDCYLKVRDSGNSG), 1345–1378 (IGKHSAAAELYLNLDLVKEAIDAFIEGEEWNKAK), 1411–1445 (GVDVIAALDLYVEQGQWDKCIETATKQNYKILHKY), 1447–1477 (ALYATHLIREGSSAQALALYVQHGAPANPQN), and 1574–1607 (DKAFYEAGIAAKAVGWDNMAFIFLNRFLDLTDAI).

The protein belongs to the IFT172 family. In terms of assembly, interacts with IFT88. Interacts with IFT57. Interacts with RABL2/RABL2A; binds preferentially to GDP-bound RABL2.

The protein resides in the cell projection. It is found in the cilium. Its function is as follows. Required for the maintenance and formation of cilia. Plays an indirect role in hedgehog (Hh) signaling, cilia being required for all activity of the hedgehog pathway. The chain is Intraflagellar transport protein 172 homolog (IFT172) from Homo sapiens (Human).